The chain runs to 274 residues: Cytochrome b-c1 complex subunit Rieske, mitochondrial (274 aa).

The Mitochondrial matrix portion of the chain corresponds to 79–103 (SHTDIKVPDFSDYRRSEVLDKTKSS). A helical transmembrane segment spans residues 104–140 (RESSDARKGFSYLVTAATAVGVTYAAKSIVTQFVSSM). The Mitochondrial intermembrane segment spans residues 141–274 (SASADVLAMS…FTGDDMVIVG (134 aa)). Positions 187–272 (EAAVELSQLR…YEFTGDDMVI (86 aa)) constitute a Rieske domain. [2Fe-2S] cluster contacts are provided by Cys217, His219, Cys236, His239, and Ser241. The cysteines at positions 222 and 238 are disulfide-linked.

This sequence belongs to the Rieske iron-sulfur protein family. In terms of assembly, component of the ubiquinol-cytochrome c oxidoreductase (cytochrome b-c1 complex, complex III, CIII), a multisubunit enzyme composed of 11 subunits. The complex is composed of 3 respiratory subunits cytochrome b, cytochrome c1 and Rieske protein UQCRFS1, 2 core protein subunits UQCRC1/QCR1 and UQCRC2/QCR2, and 6 low-molecular weight protein subunits UQCRH/QCR6, UQCRB/QCR7, UQCRQ/QCR8, UQCR10/QCR9, UQCR11/QCR10 and subunit 9, the cleavage product of Rieske protein UQCRFS1. The complex exists as an obligatory dimer and forms supercomplexes (SCs) in the inner mitochondrial membrane with NADH-ubiquinone oxidoreductase (complex I, CI) and cytochrome c oxidase (complex IV, CIV), resulting in different assemblies (supercomplex SCI(1)III(2)IV(1) and megacomplex MCI(2)III(2)IV(2)). Incorporation of the Rieske protein UQCRFS1 is the penultimate step in complex III assembly. Interacts with TTC19, which is involved in the clearance of UQCRFS1 fragments. Component of the ubiquinol-cytochrome c oxidoreductase (cytochrome b-c1 complex, complex III, CIII). Subunit 9 corresponds to the mitochondrial targeting sequence (MTS) of Rieske protein UQCRFS1. It is retained after processing and incorporated inside complex III, where it remains bound to the complex and localizes between the 2 core subunits UQCRC1/QCR1 and UQCRC2/QCR2. Requires [2Fe-2S] cluster as cofactor. In terms of processing, proteolytic processing is necessary for the correct insertion of UQCRFS1 in the complex III dimer. Several fragments are generated during UQCRFS1 insertion, most probably due to the endogenous matrix-processing peptidase (MPP) activity of the 2 core protein subunits UQCRC1/QCR1 and UQCRC2/QCR2, which are homologous to the 2 mitochondrial-processing peptidase (MPP) subunits beta-MPP and alpha-MPP respectively. The action of the protease is also necessary for the clearance of the UQCRFS1 fragments.

The protein localises to the mitochondrion inner membrane. The catalysed reaction is a quinol + 2 Fe(III)-[cytochrome c](out) = a quinone + 2 Fe(II)-[cytochrome c](out) + 2 H(+)(out). Its function is as follows. Component of the ubiquinol-cytochrome c oxidoreductase, a multisubunit transmembrane complex that is part of the mitochondrial electron transport chain which drives oxidative phosphorylation. The respiratory chain contains 3 multisubunit complexes succinate dehydrogenase (complex II, CII), ubiquinol-cytochrome c oxidoreductase (cytochrome b-c1 complex, complex III, CIII) and cytochrome c oxidase (complex IV, CIV), that cooperate to transfer electrons derived from NADH and succinate to molecular oxygen, creating an electrochemical gradient over the inner membrane that drives transmembrane transport and the ATP synthase. The cytochrome b-c1 complex catalyzes electron transfer from ubiquinol to cytochrome c, linking this redox reaction to translocation of protons across the mitochondrial inner membrane, with protons being carried across the membrane as hydrogens on the quinol. In the process called Q cycle, 2 protons are consumed from the matrix, 4 protons are released into the intermembrane space and 2 electrons are passed to cytochrome c. The Rieske protein is a catalytic core subunit containing a [2Fe-2S] iron-sulfur cluster. It cycles between 2 conformational states during catalysis to transfer electrons from the quinol bound in the Q(0) site in cytochrome b to cytochrome c1. Incorporation of UQCRFS1 is the penultimate step in complex III assembly. In terms of biological role, component of the ubiquinol-cytochrome c oxidoreductase (cytochrome b-c1 complex, complex III, CIII). UQCRFS1 undergoes proteolytic processing once it is incorporated in the complex III dimer. One of the fragments, called subunit 9, corresponds to its mitochondrial targeting sequence (MTS). The proteolytic processing is necessary for the correct insertion of UQCRFS1 in the complex III dimer, but the persistence of UQCRFS1-derived fragments may prevent newly imported UQCRFS1 to be processed and assembled into complex III and is detrimental for the complex III structure and function. This is Cytochrome b-c1 complex subunit Rieske, mitochondrial (UQCRFS1) from Lagothrix lagotricha (Brown woolly monkey).